We begin with the raw amino-acid sequence, 446 residues long: Eukaryotic translation initiation factor 2 subunit gamma (446 aa).

A tr-type G domain is found at 21–227 (QATINIGTIG…YIVKKIPIPV (207 aa)). The tract at residues 30–37 (GHVAHGKS) is G1. Position 33–38 (33–38 (AHGKST)) interacts with GTP. The interval 58 to 62 (NITIK) is G2. The tract at residues 114–117 (DCPG) is G3. GTP is bound by residues 170-173 (NKVD) and 205-207 (SAQ). The interval 170–173 (NKVD) is G4. The interval 205–207 (SAQ) is G5. An interacts with cdc123 region spans residues 436 to 446 (AKVVEGKTLKV).

The protein belongs to the TRAFAC class translation factor GTPase superfamily. Classic translation factor GTPase family. EIF2G subfamily. As to quaternary structure, eukaryotic translation initiation factor 2 eIF2 is a heterotrimeric complex composed of an alpha, a beta and a gamma subunit. The factors eIF-1, eIF-2, eIF-3, TIF5/eIF-5 and methionyl-tRNAi form a multifactor complex (MFC) that may bind to the 40S ribosome. Interacts with cdc123; the interaction is direct.

It localises to the cytoplasm. The protein resides in the cytosol. It carries out the reaction GTP + H2O = GDP + phosphate + H(+). As a subunit of eukaryotic initiation factor 2 eIF2, involved in the early steps of protein synthesis. In the presence of GTP, eIF-2 forms a ternary complex with initiator tRNA Met-tRNAi and then recruits the 40S ribosomal complex and initiation factors eIF-1, eIF-1A and eIF-3 to form the 43S pre-initiation complex (43S PIC), a step that determines the rate of protein translation. The 43S PIC binds to mRNA and scans downstream to the initiation codon, where it forms a 48S initiation complex by codon-anticodon base pairing. This leads to the displacement of eIF-1 to allow GTPase-activating protein (GAP) eIF-5-mediated hydrolysis of eIF2-bound GTP. Hydrolysis of GTP and release of Pi, which makes GTP hydrolysis irreversible, causes the release of the eIF-2-GDP binary complex from the 40S subunit, an event that is essential for the subsequent joining of the 60S ribosomal subunit to form an elongation-competent 80S ribosome. In order for eIF-2 to recycle and catalyze another round of initiation, the GDP bound to eIF-2 must be exchanged with GTP by way of a reaction catalyzed by GDP-GTP exchange factor (GEF) eIF-2B. The sequence is that of Eukaryotic translation initiation factor 2 subunit gamma (tif213) from Schizosaccharomyces pombe (strain 972 / ATCC 24843) (Fission yeast).